Consider the following 1593-residue polypeptide: DNA-directed RNA polymerase subunit beta' (1593 aa).

Positions 74, 76, 89, and 92 each coordinate Zn(2+). Mg(2+)-binding residues include Asp648, Asp650, and Asp652. 4 residues coordinate Zn(2+): Cys1026, Cys1100, Cys1107, and Cys1110.

The protein belongs to the RNA polymerase beta' chain family. The RNAP catalytic core consists of 2 alpha, 1 beta, 1 beta' and 1 omega subunit. When a sigma factor is associated with the core the holoenzyme is formed, which can initiate transcription. It depends on Mg(2+) as a cofactor. The cofactor is Zn(2+).

It catalyses the reaction RNA(n) + a ribonucleoside 5'-triphosphate = RNA(n+1) + diphosphate. Its function is as follows. DNA-dependent RNA polymerase catalyzes the transcription of DNA into RNA using the four ribonucleoside triphosphates as substrates. The protein is DNA-directed RNA polymerase subunit beta' of Endomicrobium trichonymphae.